The chain runs to 189 residues: Casparian strip membrane protein 2 (189 aa).

A disordered region spans residues 1-21; that stretch reads MKVSTIESGEISKGASSPRKG. At 1–25 the chain is on the cytoplasmic side; that stretch reads MKVSTIESGEISKGASSPRKGMKRG. A helical membrane pass occupies residues 26–46; it reads LSIMDFILRIFAAMSTLGSAL. Residues 47 to 73 are Extracellular-facing; that stretch reads SMGTAKQTMPFATRFVRFKVSFHDLPT. Residues 74-94 traverse the membrane as a helical segment; it reads FLFFVTANSIVCGYLALSLVL. Topologically, residues 95–108 are cytoplasmic; sequence SFFHIVRTISVKSR. A helical membrane pass occupies residues 109-129; that stretch reads ILLVFLDTVMFGLLTSGASAA. Topologically, residues 130-163 are extracellular; that stretch reads AAIVYVAHYGNPSANWFPFCQQYNSFCGRISGSL. A helical transmembrane segment spans residues 164–184; sequence VGSFIAVVIFMILILMSGISI. The Cytoplasmic segment spans residues 185–189; sequence SKSKH.

The protein belongs to the Casparian strip membrane proteins (CASP) family. In terms of assembly, homodimer and heterodimers.

It localises to the cell membrane. Regulates membrane-cell wall junctions and localized cell wall deposition. Required for establishment of the Casparian strip membrane domain (CSD) and the subsequent formation of Casparian strips, a cell wall modification of the root endodermis that determines an apoplastic barrier between the intraorganismal apoplasm and the extraorganismal apoplasm and prevents lateral diffusion. The protein is Casparian strip membrane protein 2 of Medicago truncatula (Barrel medic).